Reading from the N-terminus, the 154-residue chain is Ribosomal RNA large subunit methyltransferase H (154 aa).

S-adenosyl-L-methionine-binding positions include Leu-70, Gly-102, and 121-126 (LSRMTL).

The protein belongs to the RNA methyltransferase RlmH family. Homodimer.

It localises to the cytoplasm. The catalysed reaction is pseudouridine(1915) in 23S rRNA + S-adenosyl-L-methionine = N(3)-methylpseudouridine(1915) in 23S rRNA + S-adenosyl-L-homocysteine + H(+). Its function is as follows. Specifically methylates the pseudouridine at position 1915 (m3Psi1915) in 23S rRNA. The protein is Ribosomal RNA large subunit methyltransferase H of Citrifermentans bemidjiense (strain ATCC BAA-1014 / DSM 16622 / JCM 12645 / Bem) (Geobacter bemidjiensis).